Here is a 217-residue protein sequence, read N- to C-terminus: TPA-induced transmembrane protein (217 aa).

The segment at 1–37 is disordered; sequence MDLAQPSQPVDELELSVLERQPEENTPLNGADKVFPS. Residues 66 to 86 form a helical membrane-spanning segment; it reads LWMIITSIFLGVITVIIIGLC.

In terms of assembly, interacts with LIPH. In terms of tissue distribution, detected predominantly in the skin, with strongest expression in the inner root sheath of the hair follicle.

Its subcellular location is the endoplasmic reticulum. The protein resides in the cell membrane. In terms of biological role, has a role in LIPH-mediated synthesis of 2-acyl lysophosphatidic acid (LPA). LPA is a bioactive lipid mediator involved in different biological processes, and necessary to promote hair formation and growth. This Homo sapiens (Human) protein is TPA-induced transmembrane protein (TTMP).